The sequence spans 412 residues: Serine hydroxymethyltransferase (412 aa).

(6S)-5,6,7,8-tetrahydrofolate-binding positions include Leu121 and 125–127 (GHL). N6-(pyridoxal phosphate)lysine is present on Lys230. 353–355 (TPF) is a binding site for (6S)-5,6,7,8-tetrahydrofolate.

It belongs to the SHMT family. In terms of assembly, homodimer. Requires pyridoxal 5'-phosphate as cofactor.

The protein resides in the cytoplasm. The enzyme catalyses (6R)-5,10-methylene-5,6,7,8-tetrahydrofolate + glycine + H2O = (6S)-5,6,7,8-tetrahydrofolate + L-serine. Its pathway is one-carbon metabolism; tetrahydrofolate interconversion. The protein operates within amino-acid biosynthesis; glycine biosynthesis; glycine from L-serine: step 1/1. Functionally, catalyzes the reversible interconversion of serine and glycine with tetrahydrofolate (THF) serving as the one-carbon carrier. This reaction serves as the major source of one-carbon groups required for the biosynthesis of purines, thymidylate, methionine, and other important biomolecules. Also exhibits THF-independent aldolase activity toward beta-hydroxyamino acids, producing glycine and aldehydes, via a retro-aldol mechanism. This chain is Serine hydroxymethyltransferase, found in Finegoldia magna (strain ATCC 29328 / DSM 20472 / WAL 2508) (Peptostreptococcus magnus).